The following is a 232-amino-acid chain: Large ribosomal subunit protein uL1 (232 aa).

This sequence belongs to the universal ribosomal protein uL1 family. As to quaternary structure, part of the 50S ribosomal subunit.

In terms of biological role, binds directly to 23S rRNA. The L1 stalk is quite mobile in the ribosome, and is involved in E site tRNA release. Functionally, protein L1 is also a translational repressor protein, it controls the translation of the L11 operon by binding to its mRNA. The sequence is that of Large ribosomal subunit protein uL1 from Rhizobium meliloti (strain 1021) (Ensifer meliloti).